The sequence spans 145 residues: 3-hydroxyacyl-[acyl-carrier-protein] dehydratase FabZ (145 aa).

Histidine 47 is a catalytic residue.

This sequence belongs to the thioester dehydratase family. FabZ subfamily.

The protein localises to the cytoplasm. It carries out the reaction a (3R)-hydroxyacyl-[ACP] = a (2E)-enoyl-[ACP] + H2O. Functionally, involved in unsaturated fatty acids biosynthesis. Catalyzes the dehydration of short chain beta-hydroxyacyl-ACPs and long chain saturated and unsaturated beta-hydroxyacyl-ACPs. The chain is 3-hydroxyacyl-[acyl-carrier-protein] dehydratase FabZ from Chromohalobacter salexigens (strain ATCC BAA-138 / DSM 3043 / CIP 106854 / NCIMB 13768 / 1H11).